Reading from the N-terminus, the 355-residue chain is Protein RecA (355 aa).

78–85 (GPESSGKT) lines the ATP pocket.

The protein belongs to the RecA family.

The protein localises to the cytoplasm. Its function is as follows. Can catalyze the hydrolysis of ATP in the presence of single-stranded DNA, the ATP-dependent uptake of single-stranded DNA by duplex DNA, and the ATP-dependent hybridization of homologous single-stranded DNAs. It interacts with LexA causing its activation and leading to its autocatalytic cleavage. The protein is Protein RecA of Rhodobacter capsulatus (Rhodopseudomonas capsulata).